A 274-amino-acid chain; its full sequence is Large ribosomal subunit protein uL2 (274 aa).

The disordered stretch occupies residues Gly-222–Gly-274. Residues Asp-229 to Gly-239 show a composition bias toward basic and acidic residues.

This sequence belongs to the universal ribosomal protein uL2 family. As to quaternary structure, part of the 50S ribosomal subunit. Forms a bridge to the 30S subunit in the 70S ribosome.

In terms of biological role, one of the primary rRNA binding proteins. Required for association of the 30S and 50S subunits to form the 70S ribosome, for tRNA binding and peptide bond formation. It has been suggested to have peptidyltransferase activity; this is somewhat controversial. Makes several contacts with the 16S rRNA in the 70S ribosome. This is Large ribosomal subunit protein uL2 from Thermosipho africanus (strain TCF52B).